The chain runs to 127 residues: MFRTMMNGKIHRATVTEANLNYVGSITIDSAILEAVDMLPNEKVQIVNNNNGARIETYIIPGEPGSGVICLNGAAARHVQVGDVVIIMSYGMFTAEEAKTHEPKIVVLDEKNHIEMILPEEKAHTTL.

S25 (schiff-base intermediate with substrate; via pyruvic acid) is an active-site residue. The residue at position 25 (S25) is a Pyruvic acid (Ser). Substrate is bound at residue T57. Y58 serves as the catalytic Proton donor. A substrate-binding site is contributed by 73-75; the sequence is GAA.

It belongs to the PanD family. In terms of assembly, heterooctamer of four alpha and four beta subunits. Pyruvate serves as cofactor. Post-translationally, is synthesized initially as an inactive proenzyme, which is activated by self-cleavage at a specific serine bond to produce a beta-subunit with a hydroxyl group at its C-terminus and an alpha-subunit with a pyruvoyl group at its N-terminus.

It localises to the cytoplasm. It catalyses the reaction L-aspartate + H(+) = beta-alanine + CO2. It functions in the pathway cofactor biosynthesis; (R)-pantothenate biosynthesis; beta-alanine from L-aspartate: step 1/1. Its function is as follows. Catalyzes the pyruvoyl-dependent decarboxylation of aspartate to produce beta-alanine. This Listeria monocytogenes serotype 4b (strain F2365) protein is Aspartate 1-decarboxylase.